The sequence spans 113 residues: Large ribosomal subunit protein uL22 (113 aa).

It belongs to the universal ribosomal protein uL22 family. Part of the 50S ribosomal subunit.

Functionally, this protein binds specifically to 23S rRNA; its binding is stimulated by other ribosomal proteins, e.g. L4, L17, and L20. It is important during the early stages of 50S assembly. It makes multiple contacts with different domains of the 23S rRNA in the assembled 50S subunit and ribosome. In terms of biological role, the globular domain of the protein is located near the polypeptide exit tunnel on the outside of the subunit, while an extended beta-hairpin is found that lines the wall of the exit tunnel in the center of the 70S ribosome. In Roseiflexus castenholzii (strain DSM 13941 / HLO8), this protein is Large ribosomal subunit protein uL22.